The primary structure comprises 708 residues: Nicastrin (708 aa).

A signal peptide spans 1–27 (MATTRGGSGPDPGSRGLLLLSFSVVLA). Residues 28–668 (GLCGGNSVER…IFLIASKELE (641 aa)) lie on the Lumenal side of the membrane. Asn-44, Asn-54, and Asn-128 each carry an N-linked (GlcNAc...) asparagine glycan. Cys-49 and Cys-61 are disulfide-bonded. Cys-139 and Cys-158 are joined by a disulfide. N-linked (GlcNAc...) asparagine glycosylation is found at Asn-186 and Asn-203. Intrachain disulfides connect Cys-194/Cys-212 and Cys-229/Cys-247. Residues Asn-263, Asn-386, Asn-434, Asn-463, Asn-505, Asn-529, Asn-561, Asn-572, Asn-579, Asn-593, and Asn-611 are each glycosylated (N-linked (GlcNAc...) asparagine). Cys-585 and Cys-619 are oxidised to a cystine. The chain crosses the membrane as a helical span at residues 669–689 (FITLIVGFSTLVFSLIVTYCI). At 690–708 (NAKADVLFVAPREPGAVSY) the chain is on the cytoplasmic side.

This sequence belongs to the nicastrin family. As to quaternary structure, component of the gamma-secretase complex. The functional gamma-secretase complex is composed of at least four polypeptides: a presenilin homodimer (PSEN1 or PSEN2), nicastrin (NCSTN), APH1 (APH1A or APH1B) and PEN2. Binds to proteolytic processed C-terminal fragments C83 and C99 of the amyloid precursor protein (APP). Interacts with PSEN1 and PSEN2. In terms of processing, N-glycosylated.

It is found in the membrane. Its subcellular location is the cytoplasmic vesicle membrane. The protein localises to the melanosome. Essential subunit of the gamma-secretase complex, an endoprotease complex that catalyzes the intramembrane cleavage of integral membrane proteins such as Notch receptors and APP (amyloid-beta precursor protein). The gamma-secretase complex plays a role in Notch and Wnt signaling cascades and regulation of downstream processes via its role in processing key regulatory proteins, and by regulating cytosolic CTNNB1 levels. This is Nicastrin (Ncstn) from Mus musculus (Mouse).